Consider the following 355-residue polypeptide: Elongation factor Ts (355 aa).

Residues 82–85 (TDFV) are involved in Mg(2+) ion dislocation from EF-Tu.

Belongs to the EF-Ts family.

Its subcellular location is the cytoplasm. In terms of biological role, associates with the EF-Tu.GDP complex and induces the exchange of GDP to GTP. It remains bound to the aminoacyl-tRNA.EF-Tu.GTP complex up to the GTP hydrolysis stage on the ribosome. This is Elongation factor Ts from Helicobacter pylori (strain HPAG1).